We begin with the raw amino-acid sequence, 298 residues long: Cholesterol 25-hydroxylase (298 aa).

N-linked (GlcNAc...) asparagine glycosylation occurs at asparagine 5. 3 helical membrane-spanning segments follow: residues 38-58 (IFPV…FVVL), 88-108 (LGLT…LHWV), and 124-144 (LLSH…AWHL). Positions 128–263 (VLICLLLFDT…FTHWDKMLGT (136 aa)) constitute a Fatty acid hydroxylase domain. Positions 142 to 146 (WHLLH) match the Histidine box-1 motif. Residues 157–161 (HKVHH) carry the Histidine box-2 motif. A glycan (N-linked (GlcNAc...) asparagine) is linked at asparagine 163. The Histidine box-3 signature appears at 238-244 (HHDMHHS).

It belongs to the sterol desaturase family. Requires Fe cation as cofactor. Post-translationally, N-glycosylated. Widely expressed at low level and at higher level in the lung. Weakly expressed in the heart, lung and kidney.

The protein resides in the endoplasmic reticulum membrane. It catalyses the reaction cholesterol + AH2 + O2 = 25-hydroxycholesterol + A + H2O. The catalysed reaction is cholesterol + NADPH + O2 + H(+) = 25-hydroxycholesterol + NADP(+) + H2O. Its function is as follows. Catalyzes the formation of 25-hydroxycholesterol from cholesterol, leading to repress cholesterol biosynthetic enzymes. Plays a key role in cell positioning and movement in lymphoid tissues: 25-hydroxycholesterol is an intermediate in biosynthesis of 7-alpha,25-dihydroxycholesterol (7-alpha,25-OHC), an oxysterol that acts as a ligand for the G protein-coupled receptor GPR183/EBI2, a chemotactic receptor for a number of lymphoid cells. May play an important role in regulating lipid metabolism by synthesizing a corepressor that blocks sterol regulatory element binding protein (SREBP) processing. In testis, production of 25-hydroxycholesterol by macrophages may play a role in Leydig cell differentiation. Required to restrain inflammation in macrophages: production of 25-hydroxycholesterol protects macrophages from cholesterol overload, thereby preventing mitochondrial DNA release and subsequent activation of the AIM2 inflammasome. Interferon-stimulated gene which has broad antiviral activities against a wide range of enveloped viruses. This Mus musculus (Mouse) protein is Cholesterol 25-hydroxylase.